The sequence spans 341 residues: Fructose-1,6-bisphosphatase, cytosolic (341 aa).

Mg(2+) contacts are provided by glutamate 71, glutamate 100, aspartate 121, leucine 123, and aspartate 124. Substrate is bound by residues 124–127 (DGSS), asparagine 215, tyrosine 247, tyrosine 267, and lysine 277. Glutamate 283 is a Mg(2+) binding site.

Belongs to the FBPase class 1 family. Mg(2+) is required as a cofactor.

It localises to the cytoplasm. The catalysed reaction is beta-D-fructose 1,6-bisphosphate + H2O = beta-D-fructose 6-phosphate + phosphate. In Spinacia oleracea (Spinach), this protein is Fructose-1,6-bisphosphatase, cytosolic.